A 239-amino-acid chain; its full sequence is 3,4-dihydroxyphthalate decarboxylase (239 aa).

Glu84 serves as the catalytic Proton donor/acceptor. A divalent metal cation-binding residues include Glu84, His103, His105, and His171.

It belongs to the aldolase class II family. The cofactor is a divalent metal cation.

The enzyme catalyses 3,4-dihydroxyphthalate + H(+) = 3,4-dihydroxybenzoate + CO2. It participates in xenobiotic degradation; phthalate degradation. In terms of biological role, catalyzes the decarboxylation of 3,4-dihydroxyphthalate to protocatechuate (3,4-dihydroxybenzoate) during phthalate metabolism. The sequence is that of 3,4-dihydroxyphthalate decarboxylase from Terrabacter sp. (strain DBF63).